Consider the following 477-residue polypeptide: Probable glycine dehydrogenase (decarboxylating) subunit 2 (477 aa).

Lysine 264 is subject to N6-(pyridoxal phosphate)lysine.

It belongs to the GcvP family. C-terminal subunit subfamily. As to quaternary structure, the glycine cleavage system is composed of four proteins: P, T, L and H. In this organism, the P 'protein' is a heterodimer of two subunits. It depends on pyridoxal 5'-phosphate as a cofactor.

It catalyses the reaction N(6)-[(R)-lipoyl]-L-lysyl-[glycine-cleavage complex H protein] + glycine + H(+) = N(6)-[(R)-S(8)-aminomethyldihydrolipoyl]-L-lysyl-[glycine-cleavage complex H protein] + CO2. In terms of biological role, the glycine cleavage system catalyzes the degradation of glycine. The P protein binds the alpha-amino group of glycine through its pyridoxal phosphate cofactor; CO(2) is released and the remaining methylamine moiety is then transferred to the lipoamide cofactor of the H protein. The chain is Probable glycine dehydrogenase (decarboxylating) subunit 2 from Fervidobacterium nodosum (strain ATCC 35602 / DSM 5306 / Rt17-B1).